Reading from the N-terminus, the 518-residue chain is Cytochrome P450 monooxygenase COX1 (518 aa).

The chain crosses the membrane as a helical span at residues 7–25; that stretch reads VLIALSSIVVAYFVKTALA. N-linked (GlcNAc...) asparagine glycosylation is found at N48, N100, N292, N302, and N351. C450 is a binding site for heme. N-linked (GlcNAc...) asparagine glycosylation is present at N457.

It belongs to the cytochrome P450 family. The cofactor is heme.

The protein localises to the membrane. The protein operates within secondary metabolite biosynthesis. Its function is as follows. Cytochrome P450 monooxygenase; part of the gene cluster that mediates the biosynthesis of alpha-cuprenene and oxidized derivatives. The alpha-cuprenene synthase COP6 is the only sesquiterpene synthase identified in C.cinereus that appears to be part of a biosynthetic gene cluster and is highly specific since it catalyzes the cyclization of (2E,6E)-farnesyl diphosphate into only one product, alpha-cuprenene. The cytochrome P450 monooxygenase COX2 then oxidizes the cyclohexadiene ring of alpha-cuprenene at positions 1 and 4, yielding first alpha-cuparene, followed by alpha-cuparophenol and a further yet unidentified compound resulting from one additional oxidation step. The cytochrome P450 monooxygenase COX1 then likely catalyzes the oxidation at position 9 of the pentane ring of alpha-cuprenene to give the corresponding hydroxy or ketone derivatives. This is Cytochrome P450 monooxygenase COX1 from Coprinopsis cinerea (strain Okayama-7 / 130 / ATCC MYA-4618 / FGSC 9003) (Inky cap fungus).